A 257-amino-acid polypeptide reads, in one-letter code: tRNA (guanine-N(1)-)-methyltransferase (257 aa).

Residues G112 and L136 to L141 each bind S-adenosyl-L-methionine.

This sequence belongs to the RNA methyltransferase TrmD family. As to quaternary structure, homodimer.

Its subcellular location is the cytoplasm. The catalysed reaction is guanosine(37) in tRNA + S-adenosyl-L-methionine = N(1)-methylguanosine(37) in tRNA + S-adenosyl-L-homocysteine + H(+). Specifically methylates guanosine-37 in various tRNAs. This is tRNA (guanine-N(1)-)-methyltransferase from Salinispora tropica (strain ATCC BAA-916 / DSM 44818 / JCM 13857 / NBRC 105044 / CNB-440).